The sequence spans 317 residues: uncharacterized protein (317 aa).

The first 16 residues, 1–16, serve as a signal peptide directing secretion; the sequence is MKLSFILSTLVAGALA. Asn-42 carries N-linked (GlcNAc...) asparagine glycosylation. Composition is skewed to low complexity over residues 150–238 and 247–259; these read SSST…SSSS and TAST…ASSA. The disordered stretch occupies residues 150–259; it reads SSSTPSSSSS…TDDSSSASSA (110 aa).

This is an uncharacterized protein from Schizosaccharomyces pombe (strain 972 / ATCC 24843) (Fission yeast).